The chain runs to 661 residues: Peroxisomal acyl-coenzyme A oxidase 1 (661 aa).

The residue at position 26 (S26) is a Phosphoserine. K65 carries the N6-acetyllysine modification. K89 and K90 each carry N6-succinyllysine. An FAD-binding site is contributed by T139. At K159 the chain carries N6-succinyllysine. G178 serves as a coordination point for FAD. K216 carries the post-translational modification N6-acetyllysine. K241 is modified (N6-succinyllysine). Residues K255, K267, and K272 each carry the N6-acetyllysine modification. K349 bears the N6-succinyllysine mark. The active-site Proton acceptor is E421. 2 positions are modified to N6-acetyllysine; alternate: K437 and K446. An N6-succinyllysine; alternate mark is found at K437 and K446. Position 500 is an N6-acetyllysine (K500). Residue K512 is modified to N6-acetyllysine; alternate. K512 is modified (N6-succinyllysine; alternate). The residue at position 542 (K542) is an N6-succinyllysine. K637 is modified (N6-acetyllysine; alternate). An N6-succinyllysine; alternate modification is found at K637. Position 643 is an N6-succinyllysine (K643). S649 bears the Phosphoserine mark. An N6-acetyllysine modification is found at K652. At K655 the chain carries N6-succinyllysine. The Microbody targeting signal signature appears at 659-661; it reads SKL.

This sequence belongs to the acyl-CoA oxidase family. In terms of assembly, homodimer. The enzyme contains three components A, B and C, the latter two being produced from the first by a proteolytic cleavage. Interacts with LONP2. FAD serves as cofactor. Expressed in Schwann cells. Expressed (at protein level) in liver.

The protein localises to the peroxisome. It carries out the reaction a 2,3-saturated acyl-CoA + O2 = a (2E)-enoyl-CoA + H2O2. The catalysed reaction is hexadecanoyl-CoA + O2 = (2E)-hexadecenoyl-CoA + H2O2. It catalyses the reaction dodecanoyl-CoA + O2 = (2E)-dodecenoyl-CoA + H2O2. The enzyme catalyses octanoyl-CoA + O2 = (2E)-octenoyl-CoA + H2O2. It carries out the reaction decanoyl-CoA + O2 = (2E)-decenoyl-CoA + H2O2. The catalysed reaction is tetradecanoyl-CoA + O2 = (2E)-tetradecenoyl-CoA + H2O2. It catalyses the reaction hexadecanedioyl-CoA + O2 = (2E)-hexadecenedioyl-CoA + H2O2. The enzyme catalyses tetracosanoyl-CoA + O2 = (2E)-tetracosenoyl-CoA + H2O2. It carries out the reaction glutaryl-CoA + O2 = (2E)-glutaconyl-CoA + H2O2. The catalysed reaction is hexanoyl-CoA + O2 = (2E)-hexenoyl-CoA + H2O2. It catalyses the reaction octadecanoyl-CoA + O2 = (2E)-octadecenoyl-CoA + H2O2. The enzyme catalyses (5Z,8Z,11Z,14Z,17Z)-eicosapentaenoyl-CoA + O2 = (2E,5Z,8Z,11Z,14Z,17Z)-icosahexaenoyl-CoA + H2O2. It carries out the reaction (6Z,9Z,12Z,15Z,18Z,21Z)-tetracosahexaenoyl-CoA + O2 = (2E,6Z,9Z,12Z,15Z,18Z,21Z)-tetracosaheptaenoyl-CoA + H2O2. It functions in the pathway lipid metabolism; peroxisomal fatty acid beta-oxidation. Functionally, involved in the initial and rate-limiting step of peroxisomal beta-oxidation of straight-chain saturated and unsaturated very-long-chain fatty acids. Catalyzes the desaturation of fatty acyl-CoAs such as palmitoyl-CoA (hexadecanoyl-CoA) to 2-trans-enoyl-CoAs ((2E)-enoyl-CoAs) such as (2E)-hexadecenoyl-CoA, and donates electrons directly to molecular oxygen (O(2)), thereby producing hydrogen peroxide (H(2)O(2)). Its function is as follows. Shows highest activity against medium-chain fatty acyl-CoAs. Shows optimum activity with a chain length of 10 carbons (decanoyl-CoA) in vitro. In terms of biological role, is active against a much broader range of substrates and shows activity towards long-chain acyl-CoAs. This is Peroxisomal acyl-coenzyme A oxidase 1 from Rattus norvegicus (Rat).